Consider the following 101-residue polypeptide: Transcription factor ILI2 (101 aa).

The tract at residues 1-22 is disordered; sequence MSSSRRSRTSSRLAAAPPPTDE. Residues 8–63 form the bHLH domain; it reads RTSSRLAAAPPPTDEQMAELISKLQAVLPTRGGEANAKQASSAEVLQEACRYIRRL.

The protein belongs to the bHLH protein family.

In terms of biological role, atypical and probable non DNA-binding bHLH transcription factor that integrates multiple signaling pathways to regulate cell elongation and plant development. The sequence is that of Transcription factor ILI2 (ILI2) from Oryza sativa subsp. indica (Rice).